The chain runs to 452 residues: Isocitrate dehydrogenase [NADP], mitochondrial (452 aa).

Residues 1–39 (MAGYLRAVSSLCRASGSTRTWAPAALNVPSWPEQPRRHY) constitute a mitochondrion transit peptide. Residues lysine 45, lysine 48, lysine 67, and lysine 69 each carry the N6-acetyllysine modification. Lysine 80 and lysine 106 each carry N6-acetyllysine; alternate. N6-succinyllysine; alternate is present on residues lysine 80 and lysine 106. NADP(+) contacts are provided by residues 115–117 (TIT) and arginine 122. Threonine 117 is a binding site for D-threo-isocitrate. D-threo-isocitrate-binding positions include 134–140 (SPNGTIR) and arginine 149. Lysine 155 is modified (N6-acetyllysine). Lysine 166 is subject to N6-acetyllysine; alternate. N6-succinyllysine; alternate is present on lysine 166. Arginine 172 serves as a coordination point for D-threo-isocitrate. N6-acetyllysine; alternate is present on residues lysine 180 and lysine 193. N6-succinyllysine; alternate occurs at positions 180 and 193. Position 199 is an N6-acetyllysine (lysine 199). Lysine 256 carries the N6-acetyllysine; alternate modification. Lysine 256 carries the post-translational modification N6-succinyllysine; alternate. N6-acetyllysine is present on residues lysine 263, lysine 272, lysine 275, and lysine 280. Lysine 282 bears the N6-acetyllysine; alternate mark. Lysine 282 is modified (N6-succinyllysine; alternate). Aspartate 291 lines the Mn(2+) pocket. Residue lysine 299 coordinates NADP(+). Aspartate 314 is a binding site for Mn(2+). NADP(+) contacts are provided by residues 349–354 (GTVTRH) and asparagine 367. Lysine 384 is modified (N6-acetyllysine; alternate). The residue at position 384 (lysine 384) is an N6-succinyllysine; alternate. Residues lysine 400, lysine 413, and lysine 442 each carry the N6-acetyllysine modification.

The protein belongs to the isocitrate and isopropylmalate dehydrogenases family. Homodimer. Requires Mg(2+) as cofactor. Mn(2+) is required as a cofactor. Acetylation at Lys-413 dramatically reduces catalytic activity. Deacetylated by SIRT3.

It is found in the mitochondrion. It catalyses the reaction D-threo-isocitrate + NADP(+) = 2-oxoglutarate + CO2 + NADPH. Functionally, plays a role in intermediary metabolism and energy production. It may tightly associate or interact with the pyruvate dehydrogenase complex. In Rattus norvegicus (Rat), this protein is Isocitrate dehydrogenase [NADP], mitochondrial (Idh2).